A 518-amino-acid chain; its full sequence is Probable malate:quinone oxidoreductase (518 aa).

The segment at 495–518 (GAIPATTDGQSTAGTEHTPTAATV) is disordered. The span at 501–518 (TDGQSTAGTEHTPTAATV) shows a compositional bias: polar residues.

This sequence belongs to the MQO family. FAD is required as a cofactor.

The catalysed reaction is (S)-malate + a quinone = a quinol + oxaloacetate. Its pathway is carbohydrate metabolism; tricarboxylic acid cycle; oxaloacetate from (S)-malate (quinone route): step 1/1. The protein is Probable malate:quinone oxidoreductase of Mycolicibacterium gilvum (strain PYR-GCK) (Mycobacterium gilvum (strain PYR-GCK)).